A 119-amino-acid polypeptide reads, in one-letter code: Ribonuclease P protein component (119 aa).

The protein belongs to the RnpA family. Consists of a catalytic RNA component (M1 or rnpB) and a protein subunit.

It carries out the reaction Endonucleolytic cleavage of RNA, removing 5'-extranucleotides from tRNA precursor.. In terms of biological role, RNaseP catalyzes the removal of the 5'-leader sequence from pre-tRNA to produce the mature 5'-terminus. It can also cleave other RNA substrates such as 4.5S RNA. The protein component plays an auxiliary but essential role in vivo by binding to the 5'-leader sequence and broadening the substrate specificity of the ribozyme. This Bifidobacterium longum (strain DJO10A) protein is Ribonuclease P protein component.